A 97-amino-acid chain; its full sequence is Peptide YY (97 aa).

Positions 1–28 (MVFVRRPWPALTTVLLALLVCLGALVDA) are cleaved as a signal peptide. At Ser41 the chain carries Phosphoserine. Residue Tyr64 is modified to Tyrosine amide. The segment at 65–97 (GKRDGPDTLLSKTFFPDGEDRPVRSRSEGPDLW) is disordered. A propeptide spanning residues 68–97 (DGPDTLLSKTFFPDGEDRPVRSRSEGPDLW) is cleaved from the precursor. Basic and acidic residues predominate over residues 82 to 97 (GEDRPVRSRSEGPDLW).

It belongs to the NPY family. In terms of processing, the peptide YY form is cleaved at Pro-30 by the prolyl endopeptidase FAP (seprase) activity (in vitro) to generate peptide YY(3-36).

It is found in the secreted. In terms of biological role, this gut peptide inhibits exocrine pancreatic secretion, has a vasoconstrictory action and inhibitis jejunal and colonic mobility. This Homo sapiens (Human) protein is Peptide YY (PYY).